Here is a 392-residue protein sequence, read N- to C-terminus: Cell division protein FtsZ (392 aa).

Residues 24–28, 111–113, Glu-142, Arg-145, and Asp-189 contribute to the GTP site; these read GGGCN and GTG.

Belongs to the FtsZ family. In terms of assembly, homodimer. Polymerizes to form a dynamic ring structure in a strictly GTP-dependent manner. Interacts directly with several other division proteins.

It localises to the cytoplasm. Functionally, essential cell division protein that forms a contractile ring structure (Z ring) at the future cell division site. The regulation of the ring assembly controls the timing and the location of cell division. One of the functions of the FtsZ ring is to recruit other cell division proteins to the septum to produce a new cell wall between the dividing cells. Binds GTP and shows GTPase activity. The polypeptide is Cell division protein FtsZ (Neisseria meningitidis serogroup A / serotype 4A (strain DSM 15465 / Z2491)).